We begin with the raw amino-acid sequence, 156 residues long: Aspartate carbamoyltransferase regulatory chain (156 aa).

4 residues coordinate Zn(2+): Cys-107, Cys-112, Cys-137, and Cys-140.

Belongs to the PyrI family. As to quaternary structure, contains catalytic and regulatory chains. It depends on Zn(2+) as a cofactor.

In terms of biological role, involved in allosteric regulation of aspartate carbamoyltransferase. This Methanopyrus kandleri (strain AV19 / DSM 6324 / JCM 9639 / NBRC 100938) protein is Aspartate carbamoyltransferase regulatory chain.